The following is a 133-amino-acid chain: Norrin (133 aa).

The first 24 residues, 1-24 (MRKHVLAASFSMLSLLVIMGDTDS), serve as a signal peptide directing secretion. 4 disulfide bridges follow: Cys39–Cys96, Cys55–Cys110, Cys65–Cys126, and Cys69–Cys128. Residues 39-132 (CMRHHYVDSI…ILSCHCEECN (94 aa)) form the CTCK domain.

As to quaternary structure, homodimer; disulfide-linked. Component of a complex, at least composed of TSPAN12, FZD4, LRP5/6 and norrin (NDP). Binds FZD4 with high affinity. Interacts with LRP6 (via Beta-propellers 1 and 2). Expressed in the outer nuclear, inner nuclear and ganglion cell layers of the retina, and in fetal and adult brain.

It is found in the secreted. Activates the canonical Wnt signaling pathway through FZD4 and LRP5 coreceptor. Plays a central role in retinal vascularization by acting as a ligand for FZD4 that signals via stabilizing beta-catenin (CTNNB1) and activating LEF/TCF-mediated transcriptional programs. Acts in concert with TSPAN12 to activate FZD4 independently of the Wnt-dependent activation of FZD4, suggesting the existence of a Wnt-independent signaling that also promote accumulation the beta-catenin (CTNNB1). May be involved in a pathway that regulates neural cell differentiation and proliferation. Possible role in neuroectodermal cell-cell interaction. In Homo sapiens (Human), this protein is Norrin (NDP).